We begin with the raw amino-acid sequence, 183 residues long: Adenine phosphoribosyltransferase (183 aa).

It belongs to the purine/pyrimidine phosphoribosyltransferase family. As to quaternary structure, homodimer.

It is found in the cytoplasm. It carries out the reaction AMP + diphosphate = 5-phospho-alpha-D-ribose 1-diphosphate + adenine. The protein operates within purine metabolism; AMP biosynthesis via salvage pathway; AMP from adenine: step 1/1. Its function is as follows. Catalyzes a salvage reaction resulting in the formation of AMP, that is energically less costly than de novo synthesis. The chain is Adenine phosphoribosyltransferase from Klebsiella pneumoniae (strain 342).